A 66-amino-acid polypeptide reads, in one-letter code: Protein translocase subunit SecE (66 aa).

Residues 41-61 (LAVMFIVGFVGFVIYILMEIL) traverse the membrane as a helical segment.

It belongs to the SecE/SEC61-gamma family. As to quaternary structure, component of the Sec protein translocase complex. Heterotrimer consisting of SecY (alpha), SecG (beta) and SecE (gamma) subunits. The heterotrimers can form oligomers, although 1 heterotrimer is thought to be able to translocate proteins. Interacts with the ribosome. May interact with SecDF, and other proteins may be involved.

It localises to the cell membrane. Functionally, essential subunit of the Sec protein translocation channel SecYEG. Clamps together the 2 halves of SecY. May contact the channel plug during translocation. This is Protein translocase subunit SecE from Archaeoglobus fulgidus (strain ATCC 49558 / DSM 4304 / JCM 9628 / NBRC 100126 / VC-16).